A 157-amino-acid chain; its full sequence is Subgroup A Rous sarcoma virus receptor pg950 (157 aa).

The first 19 residues, 1 to 19 (MARLLPALLLLLLPGNVTG), serve as a signal peptide directing secretion. N-linked (GlcNAc...) asparagine glycosylation is found at asparagine 20 and asparagine 24. Residues 20–102 (NGSGNGSLSR…RALPARNHGR (83 aa)) lie on the Extracellular side of the membrane. Positions 28 to 71 (SRCPPGQFRCSEPPGAHGECYPQDWLCDGHPDCDDGRDEWGCGT) constitute an LDL-receptor class A domain. Cystine bridges form between cysteine 30–cysteine 47, cysteine 37–cysteine 60, and cysteine 54–cysteine 69. An N-linked (GlcNAc...) asparagine glycan is attached at asparagine 81. A helical transmembrane segment spans residues 103-125 (MWMLITAVLLCCLVAVGGIAAWG). The Cytoplasmic portion of the chain corresponds to 126–157 (KSKAKSRSDIFSLASASKELLVPDKSQADLFS).

As to quaternary structure, (Microbial infection) Interacts with Rous sarcoma virus envelope protein; this interaction allows the viral attachment.

It is found in the membrane. Responsible for susceptibility to the retrovirus subgroup A Rous sarcoma virus. The protein is Subgroup A Rous sarcoma virus receptor pg950 of Coturnix japonica (Japanese quail).